Consider the following 159-residue polypeptide: uncharacterized protein (159 aa).

The next 4 helical transmembrane spans lie at 22-42, 45-65, 80-100, and 104-124; these read LFSSSLYHSAFDCSFGISFTI, PIEYIVLSKPCFFAITPLLTL, IWVSTVTSLPISHCLIVSLSL, and FPSLFYSALVLSCLSLLCLAF.

It localises to the membrane. This is an uncharacterized protein from Schizosaccharomyces pombe (strain 972 / ATCC 24843) (Fission yeast).